We begin with the raw amino-acid sequence, 386 residues long: MATTSMPLNKIDPRQRAWVEVSPDAIKANTLAIRSLLDEQCLLMAVVKADGYGHGSETVAEAALAGGATNLGVATLQEALELRKAGIVCPILVLGNLINPEDLDACIHWDLMPTLSSAREALLCNQIAESHDKEFCVHIKVDTGMTRLGCDLRLASELIQLVDNLKNLSLRGIYSHLALADVEANGQANSFTSKQKEKFETLLSSVMPRGKPLYRHLANSAGTLRDKGLHFDMVRVGLALYGYSPLKDLRNNFSLQPALAVRAKVTLLRDVPSDTGVSYGHTFITQRPSRLAVVGIGYADGISRALSGKMSVLIDGKFYPQVGSITMDQLVIDITESPQIQIGSVVTLLGVDGDSAITPYDWSEISGSIPWEILCSFKYRLPRVVI.

Catalysis depends on lysine 48, which acts as the Proton acceptor; specific for D-alanine. The residue at position 48 (lysine 48) is an N6-(pyridoxal phosphate)lysine. Arginine 147 serves as a coordination point for substrate. Tyrosine 279 acts as the Proton acceptor; specific for L-alanine in catalysis. Position 327 (methionine 327) interacts with substrate.

It belongs to the alanine racemase family. It depends on pyridoxal 5'-phosphate as a cofactor.

The catalysed reaction is L-alanine = D-alanine. Its pathway is amino-acid biosynthesis; D-alanine biosynthesis; D-alanine from L-alanine: step 1/1. In terms of biological role, catalyzes the interconversion of L-alanine and D-alanine. May also act on other amino acids. The sequence is that of Alanine racemase (alr) from Prochlorococcus marinus (strain SARG / CCMP1375 / SS120).